Consider the following 279-residue polypeptide: Energy-coupling factor transporter ATP-binding protein EcfA2 (279 aa).

Residues 3–245 (IALENVNFIY…VVFMEEVQLG (243 aa)) form the ABC transporter domain. ATP is bound at residue 40–47 (GHTGSGKS).

Belongs to the ABC transporter superfamily. Energy-coupling factor EcfA family. As to quaternary structure, forms a stable energy-coupling factor (ECF) transporter complex composed of 2 membrane-embedded substrate-binding proteins (S component), 2 ATP-binding proteins (A component) and 2 transmembrane proteins (T component).

It is found in the cell membrane. ATP-binding (A) component of a common energy-coupling factor (ECF) ABC-transporter complex. Unlike classic ABC transporters this ECF transporter provides the energy necessary to transport a number of different substrates. The chain is Energy-coupling factor transporter ATP-binding protein EcfA2 from Streptococcus pneumoniae serotype 2 (strain D39 / NCTC 7466).